The chain runs to 194 residues: Molybdenum cofactor guanylyltransferase (194 aa).

GTP-binding positions include 12–14 (LAG), lysine 25, asparagine 53, aspartate 70, and aspartate 100. Residue aspartate 100 participates in Mg(2+) binding.

The protein belongs to the MobA family. Monomer. Mg(2+) is required as a cofactor.

It is found in the cytoplasm. It carries out the reaction Mo-molybdopterin + GTP + H(+) = Mo-molybdopterin guanine dinucleotide + diphosphate. Transfers a GMP moiety from GTP to Mo-molybdopterin (Mo-MPT) cofactor (Moco or molybdenum cofactor) to form Mo-molybdopterin guanine dinucleotide (Mo-MGD) cofactor. The sequence is that of Molybdenum cofactor guanylyltransferase from Aliivibrio fischeri (strain ATCC 700601 / ES114) (Vibrio fischeri).